A 66-amino-acid chain; its full sequence is Large ribosomal subunit protein bL35 (66 aa).

Basic residues predominate over residues 1–26 (MPKMKTHRGSAKRFKKTGSGKLKRSH). The tract at residues 1–48 (MPKMKTHRGSAKRFKKTGSGKLKRSHAYTSHLFANKSQKQKRKLRKSA) is disordered.

It belongs to the bacterial ribosomal protein bL35 family.

The sequence is that of Large ribosomal subunit protein bL35 from Bacillus licheniformis (strain ATCC 14580 / DSM 13 / JCM 2505 / CCUG 7422 / NBRC 12200 / NCIMB 9375 / NCTC 10341 / NRRL NRS-1264 / Gibson 46).